The following is a 133-amino-acid chain: Small ribosomal subunit protein uS8 (133 aa).

The protein belongs to the universal ribosomal protein uS8 family. Part of the 30S ribosomal subunit.

One of the primary rRNA binding proteins, it binds directly to 16S rRNA central domain where it helps coordinate assembly of the platform of the 30S subunit. In Ignicoccus hospitalis (strain KIN4/I / DSM 18386 / JCM 14125), this protein is Small ribosomal subunit protein uS8.